The chain runs to 414 residues: MVDHLKRQDEKVFAAIEAELGRQRSKIELIASENFVSEAVMEAQGSVLTNKYAEGYPGKRYYGGCEHVDVVEDIARDRVKEIFGAEHVNVQPHSGAQANMAVYFTILEQGDTVLGMNLSHGGHLTHGSPVNFSGVQYNFVEYGVDAESHRINYDDVLAKAKEHKPKLIVAGASAYPRVIDFKRFREIADEVGAYLMVDMAHIAGLVAAGLHPNPVPHAHFVTTTTHKTLRGPRGGMILCEEQFAKQIDKSIFPGIQGGPLMHVIAAKAVAFGEALQDDFKTYAQNIINNANRLAEGLQKEGLTLVSGGTDNHLILIDVRNLEITGKVAEHVLDEVGITVNKNTIPFETASPFVTSGVRIGTAAVTSRGFGLEDMDEIASLIAYTLKNHENEAALEEARKRVEALTSKFPMYTDL.

(6S)-5,6,7,8-tetrahydrofolate is bound by residues Leu118 and 122–124 (GHL). Residue Lys227 is modified to N6-(pyridoxal phosphate)lysine. (6S)-5,6,7,8-tetrahydrofolate-binding positions include Glu240 and 350–352 (SPF).

It belongs to the SHMT family. Homodimer. Requires pyridoxal 5'-phosphate as cofactor.

It is found in the cytoplasm. It carries out the reaction (6R)-5,10-methylene-5,6,7,8-tetrahydrofolate + glycine + H2O = (6S)-5,6,7,8-tetrahydrofolate + L-serine. The protein operates within one-carbon metabolism; tetrahydrofolate interconversion. It functions in the pathway amino-acid biosynthesis; glycine biosynthesis; glycine from L-serine: step 1/1. Functionally, catalyzes the reversible interconversion of serine and glycine with tetrahydrofolate (THF) serving as the one-carbon carrier. This reaction serves as the major source of one-carbon groups required for the biosynthesis of purines, thymidylate, methionine, and other important biomolecules. Also exhibits THF-independent aldolase activity toward beta-hydroxyamino acids, producing glycine and aldehydes, via a retro-aldol mechanism. This is Serine hydroxymethyltransferase from Bacillus thuringiensis (strain Al Hakam).